The chain runs to 296 residues: Small ribosomal subunit protein uS2 (296 aa).

2 disordered regions span residues 1–24 (MNTK…TQSQ) and 270–296 (HELK…EASQ).

Belongs to the universal ribosomal protein uS2 family.

The polypeptide is Small ribosomal subunit protein uS2 (Mycoplasmopsis synoviae (strain 53) (Mycoplasma synoviae)).